The following is a 448-amino-acid chain: Phosphoglucosamine mutase (448 aa).

Ser-100 acts as the Phosphoserine intermediate in catalysis. Residues Ser-100, Asp-240, Asp-242, and Asp-244 each contribute to the Mg(2+) site. Residue Ser-100 is modified to Phosphoserine.

Belongs to the phosphohexose mutase family. Homodimer, may form a complex with CdaA. The cofactor is Mg(2+). In terms of processing, activated by phosphorylation.

It carries out the reaction alpha-D-glucosamine 1-phosphate = D-glucosamine 6-phosphate. Catalyzes the conversion of glucosamine-6-phosphate to glucosamine-1-phosphate. Glucosamine-1-phosphate is used for cell wall biosynthesis. This is Phosphoglucosamine mutase from Bacillus subtilis (strain 168).